A 224-amino-acid chain; its full sequence is Large ribosomal subunit protein bL25 (224 aa).

Residues 196 to 224 are disordered; it reads VEEVDTDAEEVDAADVPATEQGSEEDKGE. A compositionally biased stretch (acidic residues) spans 197-208; the sequence is EEVDTDAEEVDA.

It belongs to the bacterial ribosomal protein bL25 family. CTC subfamily. In terms of assembly, part of the 50S ribosomal subunit; part of the 5S rRNA/L5/L18/L25 subcomplex. Contacts the 5S rRNA. Binds to the 5S rRNA independently of L5 and L18.

In terms of biological role, this is one of the proteins that binds to the 5S RNA in the ribosome where it forms part of the central protuberance. The protein is Large ribosomal subunit protein bL25 of Psychrobacter sp. (strain PRwf-1).